Reading from the N-terminus, the 415-residue chain is Gamma-glutamyl phosphate reductase (415 aa).

The protein belongs to the gamma-glutamyl phosphate reductase family.

The protein localises to the cytoplasm. The enzyme catalyses L-glutamate 5-semialdehyde + phosphate + NADP(+) = L-glutamyl 5-phosphate + NADPH + H(+). The protein operates within amino-acid biosynthesis; L-proline biosynthesis; L-glutamate 5-semialdehyde from L-glutamate: step 2/2. Its function is as follows. Catalyzes the NADPH-dependent reduction of L-glutamate 5-phosphate into L-glutamate 5-semialdehyde and phosphate. The product spontaneously undergoes cyclization to form 1-pyrroline-5-carboxylate. In Bacteroides fragilis (strain YCH46), this protein is Gamma-glutamyl phosphate reductase.